The following is a 379-amino-acid chain: Beta-1,3-N-acetylglucosaminyltransferase lunatic fringe (379 aa).

Residues 1–8 (MLKRCGRR) lie on the Cytoplasmic side of the membrane. A helical; Signal-anchor for type II membrane protein transmembrane segment spans residues 9 to 29 (LLLALAGALLACLLVLTADPP). At 30 to 379 (PPPLPAERGR…TPWCPRTAIF (350 aa)) the chain is on the lumenal side. A disordered region spans residues 86 to 107 (RDAGPPPGAAPRPADGHPRPLA). Arg129 provides a ligand contact to substrate. N-linked (GlcNAc...) asparagine glycosylation is present at Asn167. Disulfide bonds link Cys168–Cys179 and Cys197–Cys260. Asp201 serves as a coordination point for substrate. Asp202 is a binding site for Mn(2+). Asp290 is an active-site residue. Residue His314 coordinates Mn(2+). A disulfide bond links Cys364 and Cys373.

It belongs to the glycosyltransferase 31 family. The cofactor is Mn(2+). It depends on Co(2+) as a cofactor. In terms of processing, a soluble form may be derived from the membrane form by proteolytic processing.

It is found in the golgi apparatus. The protein localises to the golgi apparatus membrane. It carries out the reaction 3-O-(alpha-L-fucosyl)-L-threonyl-[EGF-like domain protein] + UDP-N-acetyl-alpha-D-glucosamine = 3-O-(N-acetyl-beta-D-glucosaminyl-(1-&gt;3)-alpha-L-fucosyl)-L-threonyl-[EGF-like domain protein] + UDP + H(+). The catalysed reaction is 3-O-(alpha-L-fucosyl)-L-seryl-[EGF-like domain protein] + UDP-N-acetyl-alpha-D-glucosamine = 3-O-(N-acetyl-beta-D-glucosaminyl-(1-&gt;3)-alpha-L-fucosyl)-L-seryl-[EGF-like domain protein] + UDP + H(+). In terms of biological role, glycosyltransferase that initiates the elongation of O-linked fucose residues attached to EGF-like repeats in the extracellular domain of Notch molecules. Modulates NOTCH1 activity by modifying O-fucose residues at specific EGF-like domains resulting in inhibition of NOTCH1 activation by JAG1 and enhancement of NOTCH1 activation by DLL1 via an increase in its binding to DLL1. Decreases the binding of JAG1 to NOTCH2 but not that of DLL1. Essential mediator of somite segmentation and patterning. The chain is Beta-1,3-N-acetylglucosaminyltransferase lunatic fringe from Homo sapiens (Human).